A 311-amino-acid polypeptide reads, in one-letter code: Aspartate carbamoyltransferase catalytic subunit (311 aa).

Positions 59 and 60 each coordinate carbamoyl phosphate. Residue K87 participates in L-aspartate binding. Carbamoyl phosphate contacts are provided by R109, H139, and Q142. 2 residues coordinate L-aspartate: R172 and R224. 2 residues coordinate carbamoyl phosphate: A265 and P266.

The protein belongs to the aspartate/ornithine carbamoyltransferase superfamily. ATCase family. As to quaternary structure, heterododecamer (2C3:3R2) of six catalytic PyrB chains organized as two trimers (C3), and six regulatory PyrI chains organized as three dimers (R2).

It carries out the reaction carbamoyl phosphate + L-aspartate = N-carbamoyl-L-aspartate + phosphate + H(+). It functions in the pathway pyrimidine metabolism; UMP biosynthesis via de novo pathway; (S)-dihydroorotate from bicarbonate: step 2/3. In terms of biological role, catalyzes the condensation of carbamoyl phosphate and aspartate to form carbamoyl aspartate and inorganic phosphate, the committed step in the de novo pyrimidine nucleotide biosynthesis pathway. In Streptococcus equi subsp. equi (strain 4047), this protein is Aspartate carbamoyltransferase catalytic subunit.